A 178-amino-acid chain; its full sequence is ATP synthase subunit delta (178 aa).

It belongs to the ATPase delta chain family. F-type ATPases have 2 components, F(1) - the catalytic core - and F(0) - the membrane proton channel. F(1) has five subunits: alpha(3), beta(3), gamma(1), delta(1), epsilon(1). F(0) has three main subunits: a(1), b(2) and c(10-14). The alpha and beta chains form an alternating ring which encloses part of the gamma chain. F(1) is attached to F(0) by a central stalk formed by the gamma and epsilon chains, while a peripheral stalk is formed by the delta and b chains.

It localises to the cell inner membrane. F(1)F(0) ATP synthase produces ATP from ADP in the presence of a proton or sodium gradient. F-type ATPases consist of two structural domains, F(1) containing the extramembraneous catalytic core and F(0) containing the membrane proton channel, linked together by a central stalk and a peripheral stalk. During catalysis, ATP synthesis in the catalytic domain of F(1) is coupled via a rotary mechanism of the central stalk subunits to proton translocation. Functionally, this protein is part of the stalk that links CF(0) to CF(1). It either transmits conformational changes from CF(0) to CF(1) or is implicated in proton conduction. This chain is ATP synthase subunit delta, found in Nitrosomonas eutropha (strain DSM 101675 / C91 / Nm57).